Reading from the N-terminus, the 213-residue chain is Protein HSH49 (213 aa).

RRM domains lie at asparagine 9–asparagine 88 and alanine 108–lysine 185.

In terms of assembly, interacts with RDS3.

It is found in the nucleus. In terms of biological role, possible SF3b-like factor. The polypeptide is Protein HSH49 (HSH49) (Saccharomyces cerevisiae (strain ATCC 204508 / S288c) (Baker's yeast)).